We begin with the raw amino-acid sequence, 987 residues long: Nuclear matrix constituent protein 1b (987 aa).

The disordered stretch occupies residues 1–25; the sequence is MASPRSAGGVGGGGGGGGGSGGAAA. Gly residues predominate over residues 8 to 24; it reads GGVGGGGGGGGGSGGAA. 2 coiled-coil regions span residues 403 to 545 and 594 to 717; these read LAEL…ERRA and LSKI…DREA. Basic and acidic residues-rich tracts occupy residues 752-764 and 898-908; these read SDINVKDNHHDNS and CKEHEYGDKGP. 2 disordered regions span residues 752-775 and 887-987; these read SDINVKDNHHDNSHSSPKQRFGRK and HDEA…FLIT. Over residues 944–954 the composition is skewed to polar residues; that stretch reads ATVSATETSNV. The segment covering 956 to 973 has biased composition (acidic residues); that stretch reads GPEDNNDSDEEDEEEEEE.

Belongs to the CRWN family. In terms of assembly, interacts with SWI3C.

Its subcellular location is the nucleus matrix. The protein resides in the nucleus lamina. Functionally, architectural component of nuclear structure that plays different roles in controlling nuclear size and morphology. Involved in the modification of chromatin accessibility by interacting with SWI3C, a component of the chromatin-remodeling complex, to thus reduce the suppression effect of the complex. Acts as positive regulator of drought resistance and modulates root growth. Positively regulates the expression of genes related to root growth and drought resistance. This Oryza sativa subsp. japonica (Rice) protein is Nuclear matrix constituent protein 1b.